A 452-amino-acid polypeptide reads, in one-letter code: Bifunctional protein GlmU (452 aa).

Positions 1–232 (MTTRTSLTIV…EDEVRGINTK (232 aa)) are pyrophosphorylase. Residues 11-14 (LAAG), Lys25, Gln78, and 83-84 (GT) contribute to the UDP-N-acetyl-alpha-D-glucosamine site. Asp108 contributes to the Mg(2+) binding site. UDP-N-acetyl-alpha-D-glucosamine contacts are provided by Gly144, Glu158, Asn173, and Asn230. Asn230 contributes to the Mg(2+) binding site. The interval 233-253 (AQLAEAEAVMQTRLRQAAMTA) is linker. Positions 254–452 (GVTLISPETI…SARARKPKTS (199 aa)) are N-acetyltransferase. The UDP-N-acetyl-alpha-D-glucosamine site is built by Arg319 and Lys337. The Proton acceptor role is filled by His349. UDP-N-acetyl-alpha-D-glucosamine contacts are provided by Tyr352 and Asn363. Acetyl-CoA contacts are provided by residues Ala366, 372–373 (NY), Ser391, Ser409, and Arg426.

It in the N-terminal section; belongs to the N-acetylglucosamine-1-phosphate uridyltransferase family. The protein in the C-terminal section; belongs to the transferase hexapeptide repeat family. Homotrimer. Mg(2+) is required as a cofactor.

It localises to the cytoplasm. It carries out the reaction alpha-D-glucosamine 1-phosphate + acetyl-CoA = N-acetyl-alpha-D-glucosamine 1-phosphate + CoA + H(+). The catalysed reaction is N-acetyl-alpha-D-glucosamine 1-phosphate + UTP + H(+) = UDP-N-acetyl-alpha-D-glucosamine + diphosphate. The protein operates within nucleotide-sugar biosynthesis; UDP-N-acetyl-alpha-D-glucosamine biosynthesis; N-acetyl-alpha-D-glucosamine 1-phosphate from alpha-D-glucosamine 6-phosphate (route II): step 2/2. Its pathway is nucleotide-sugar biosynthesis; UDP-N-acetyl-alpha-D-glucosamine biosynthesis; UDP-N-acetyl-alpha-D-glucosamine from N-acetyl-alpha-D-glucosamine 1-phosphate: step 1/1. It functions in the pathway bacterial outer membrane biogenesis; LPS lipid A biosynthesis. In terms of biological role, catalyzes the last two sequential reactions in the de novo biosynthetic pathway for UDP-N-acetylglucosamine (UDP-GlcNAc). The C-terminal domain catalyzes the transfer of acetyl group from acetyl coenzyme A to glucosamine-1-phosphate (GlcN-1-P) to produce N-acetylglucosamine-1-phosphate (GlcNAc-1-P), which is converted into UDP-GlcNAc by the transfer of uridine 5-monophosphate (from uridine 5-triphosphate), a reaction catalyzed by the N-terminal domain. The protein is Bifunctional protein GlmU of Rhodopseudomonas palustris (strain BisB5).